Here is a 187-residue protein sequence, read N- to C-terminus: Orotate phosphoribosyltransferase (187 aa).

Residues arginine 103, lysine 104, lysine 107, and glutamate 129–serine 137 each bind 5-phospho-alpha-D-ribose 1-diphosphate. Orotate is bound by residues threonine 133 and arginine 161.

This sequence belongs to the purine/pyrimidine phosphoribosyltransferase family. PyrE subfamily. As to quaternary structure, homodimer. Mg(2+) serves as cofactor.

The enzyme catalyses orotidine 5'-phosphate + diphosphate = orotate + 5-phospho-alpha-D-ribose 1-diphosphate. It functions in the pathway pyrimidine metabolism; UMP biosynthesis via de novo pathway; UMP from orotate: step 1/2. Functionally, catalyzes the transfer of a ribosyl phosphate group from 5-phosphoribose 1-diphosphate to orotate, leading to the formation of orotidine monophosphate (OMP). This is Orotate phosphoribosyltransferase from Methanosarcina mazei (strain ATCC BAA-159 / DSM 3647 / Goe1 / Go1 / JCM 11833 / OCM 88) (Methanosarcina frisia).